We begin with the raw amino-acid sequence, 173 residues long: Siroheme decarboxylase alpha subunit (173 aa).

The substrate site is built by H115 and R119.

This sequence belongs to the Ahb/Nir family. As to quaternary structure, forms a heterodimer composed of AhbA and AhbB.

The catalysed reaction is siroheme + 2 H(+) = 12,18-didecarboxysiroheme + 2 CO2. The protein operates within porphyrin-containing compound metabolism; protoheme biosynthesis. In terms of biological role, involved in siroheme-dependent heme b biosynthesis. Catalyzes the decarboxylation of siroheme into didecarboxysiroheme. Siroheme is decarboxylated to monodecarboxysiroheme, which is in turn decarboxylated to didecarboxysiroheme. The polypeptide is Siroheme decarboxylase alpha subunit (Desulfovibrio desulfuricans (strain ATCC 27774 / DSM 6949 / MB)).